The following is a 242-amino-acid chain: Small ribosomal subunit protein uS2 (242 aa).

The protein belongs to the universal ribosomal protein uS2 family.

This Shewanella pealeana (strain ATCC 700345 / ANG-SQ1) protein is Small ribosomal subunit protein uS2.